A 1021-amino-acid chain; its full sequence is INO80 complex subunit D (1021 aa).

Lysine 87 is covalently cross-linked (Glycyl lysine isopeptide (Lys-Gly) (interchain with G-Cter in SUMO2)). At serine 132 the chain carries Phosphoserine. 5 disordered regions span residues 194–239 (FSTP…PMQG), 514–570 (RGDN…SMPT), 808–844 (RQQY…PHTS), 911–940 (SLST…SVLP), and 976–1021 (QLSS…PSPN). Polar residues predominate over residues 224–239 (VCKSPQPQNTSLPMQG). Positions 520-554 (KVQHQQQRKPRKKTKPPALTKKHKKKRRRGPRRPQ) are enriched in basic residues. Positions 911 to 926 (SLSTPPTTSNSETTQP) are enriched in low complexity. Residues 931 to 940 (VTPSSSSVLP) are compositionally biased toward polar residues. The span at 995–1014 (APPTGFTATGATATSTNNAS) shows a compositional bias: low complexity.

It belongs to the INO80D family. In terms of assembly, component of the chromatin remodeling INO80 complex; specifically part of a complex module associated with the N-terminus of INO80.

It is found in the nucleus. Functionally, putative regulatory component of the chromatin remodeling INO80 complex which is involved in transcriptional regulation, DNA replication and probably DNA repair. This chain is INO80 complex subunit D, found in Mus musculus (Mouse).